We begin with the raw amino-acid sequence, 317 residues long: Ventral anterior homeobox 1 (317 aa).

The segment at 1 to 62 (MEVRYSQDSE…CEKSRASSGD (62 aa)) is disordered. A compositionally biased stretch (basic and acidic residues) spans 18–27 (GLKEGKEGKD). The homeobox DNA-binding region spans 92 to 151 (PKRTRTSFTAEQLYRLEMEFQRCQYVVGRERTELARQLNLSETQVKVWFQNRRTKQKKDQ). Positions 203–248 (GPSLGITANGGSSSSSRSSAGSSGTAGGSPPLPTVTSSGTVTGLQG) are disordered. Positions 212–225 (GGSSSSSRSSAGSS) are enriched in low complexity. The segment covering 236 to 247 (TVTSSGTVTGLQ) has biased composition (polar residues).

Belongs to the EMX homeobox family. Expressed in the anterior neural keel and later in the preoptic area and optic stalk.

The protein resides in the nucleus. Transcription factor that is required for closure of the choroid fissure and together with Vax2 is required for optic nerve differentiation and to limit retinal development to the optic cup. The polypeptide is Ventral anterior homeobox 1 (vax1) (Danio rerio (Zebrafish)).